Reading from the N-terminus, the 402-residue chain is Multidrug resistance protein MdtH (402 aa).

Helical transmembrane passes span 13-33 (YFLLVDNMLVVLGFFVVFPLI), 34-54 (SIRFVDQMGWAALMVGIALGL), 99-116 (PWVLWFSCILSGLGGTLF), 139-159 (ILMMQDSAGAVIGALLGSWLL), 165-185 (LVCSAGAALFIACAAFNAWYL), 214-234 (VLTLTGYYMLAVQVMLMLPIM), 243-263 (AAVKWMYAIEATISLTLLYPI), 277-297 (LMAGLLVMTLAMLPIGMTSSL), 300-320 (LFTLICLFYIGSIIAEPARET), 340-360 (LGLAFGGALGYAGGGWLFDAG), and 369-389 (PWLMLGAIGVITFLALWWQFS).

This sequence belongs to the major facilitator superfamily. DHA1 family. MdtH (TC 2.A.1.2.21) subfamily.

Its subcellular location is the cell inner membrane. In Klebsiella pneumoniae subsp. pneumoniae (strain ATCC 700721 / MGH 78578), this protein is Multidrug resistance protein MdtH.